The primary structure comprises 571 residues: Urease subunit alpha (571 aa).

A Urease domain is found at 133-571 (GGVDSHIHFI…LPLAQRYFLF (439 aa)). Ni(2+)-binding residues include His-138, His-140, and Lys-221. An N6-carboxylysine modification is found at Lys-221. His-223 is a substrate binding site. Ni(2+)-binding residues include His-250 and His-276. The active-site Proton donor is the His-324. Position 364 (Asp-364) interacts with Ni(2+).

This sequence belongs to the metallo-dependent hydrolases superfamily. Urease alpha subunit family. As to quaternary structure, heterotrimer of UreA (gamma), UreB (beta) and UreC (alpha) subunits. Three heterotrimers associate to form the active enzyme. Requires Ni cation as cofactor. Post-translationally, carboxylation allows a single lysine to coordinate two nickel ions.

It localises to the cytoplasm. It catalyses the reaction urea + 2 H2O + H(+) = hydrogencarbonate + 2 NH4(+). The protein operates within nitrogen metabolism; urea degradation; CO(2) and NH(3) from urea (urease route): step 1/1. This Anaeromyxobacter sp. (strain Fw109-5) protein is Urease subunit alpha.